The primary structure comprises 539 residues: Chaperonin GroEL (539 aa).

ATP contacts are provided by residues 29–32 (TLGP), 86–90 (DGTTT), glycine 413, 476–478 (NAA), and aspartate 492.

The protein belongs to the chaperonin (HSP60) family. Forms a cylinder of 14 subunits composed of two heptameric rings stacked back-to-back. Interacts with the co-chaperonin GroES.

It localises to the cytoplasm. It carries out the reaction ATP + H2O + a folded polypeptide = ADP + phosphate + an unfolded polypeptide.. Functionally, together with its co-chaperonin GroES, plays an essential role in assisting protein folding. The GroEL-GroES system forms a nano-cage that allows encapsulation of the non-native substrate proteins and provides a physical environment optimized to promote and accelerate protein folding. This Streptococcus thermophilus (strain CNRZ 1066) protein is Chaperonin GroEL.